The following is a 222-amino-acid chain: Kunitz trypsin inhibitor 3 (222 aa).

An N-terminal signal peptide occupies residues 1 to 23; it reads MEKLTLSFITLTVLSAIFTAASA. N65 carries N-linked (GlcNAc...) asparagine glycosylation. 2 disulfides stabilise this stretch: C72/C119 and C165/C173. The N-linked (GlcNAc...) asparagine glycan is linked to N175.

This sequence belongs to the protease inhibitor I3 (leguminous Kunitz-type inhibitor) family.

Functionally, exhibits Kunitz trypsin protease inhibitor activity. The sequence is that of Kunitz trypsin inhibitor 3 from Arabidopsis thaliana (Mouse-ear cress).